Here is a 161-residue protein sequence, read N- to C-terminus: Nucleotide-binding protein SAR11_0692 (161 aa).

It belongs to the YajQ family.

In terms of biological role, nucleotide-binding protein. The protein is Nucleotide-binding protein SAR11_0692 of Pelagibacter ubique (strain HTCC1062).